The chain runs to 622 residues: UvrABC system protein C (622 aa).

The 80-residue stretch at 13–92 (DKPGVYLMKN…IKKYRPRYNI (80 aa)) folds into the GIY-YIG domain. Positions 204-239 (KDIIRKLKEDMDTLSENMEFEKAAELRDKIFALEKI) constitute a UVR domain.

This sequence belongs to the UvrC family. As to quaternary structure, interacts with UvrB in an incision complex.

It localises to the cytoplasm. Its function is as follows. The UvrABC repair system catalyzes the recognition and processing of DNA lesions. UvrC both incises the 5' and 3' sides of the lesion. The N-terminal half is responsible for the 3' incision and the C-terminal half is responsible for the 5' incision. The polypeptide is UvrABC system protein C (Clostridium kluyveri (strain ATCC 8527 / DSM 555 / NBRC 12016 / NCIMB 10680 / K1)).